Reading from the N-terminus, the 919-residue chain is Aminodeoxychorismate synthase, chloroplastic (919 aa).

Residues 1-45 constitute a chloroplast transit peptide; it reads MNMNFSFCSTSSELSYPSENVLRFSVASRLFSPKWKKSFISLPCR. Residues 86–342 form the Glutamine amidotransferase type-1 domain; sequence RTLLIDNYDS…KDITVNYWSR (257 aa). The active-site Nucleophile is the C172. Residues H316 and E318 contribute to the active site. Residues 436–910 form a PABB component region; sequence IFMELFGKNR…KTRAPANAVM (475 aa).

This sequence in the C-terminal section; belongs to the anthranilate synthase component I family.

It localises to the plastid. Its subcellular location is the chloroplast. The catalysed reaction is chorismate + L-glutamine = 4-amino-4-deoxychorismate + L-glutamate. Its pathway is cofactor biosynthesis; tetrahydrofolate biosynthesis; 4-aminobenzoate from chorismate: step 1/2. Activated by chorismate and inhibited by dihydrofolate and methotrexate. Its function is as follows. Bifunctional enzyme that catalyzes the biosynthesis of 4-amino-4-deoxychorismate (ADC) from chorismate and glutamine. In the first step, a glutamine amidotransferase generates ammonia that is channelled between the binding sites of glutamine and chorismate and used along with chorismate in the second step, catalyzed by aminodeoxychorismate synthase, to produce ADC. Required for the synthesis of 4-aminobenzoate (PABA), an important component in tetrahydrofolate biosynthesis. Does not possess ADC lyase activity. The sequence is that of Aminodeoxychorismate synthase, chloroplastic (ADCS) from Arabidopsis thaliana (Mouse-ear cress).